The following is a 772-amino-acid chain: 5-methyltetrahydropteroyltriglutamate--homocysteine methyltransferase (772 aa).

5-methyltetrahydropteroyltri-L-glutamate is bound by residues 24–27 (RELK) and Lys-120. The tract at residues 404–428 (DPAVRSRTAATTDADARRSGPYPER) is disordered. L-homocysteine is bound by residues 446 to 448 (IGS) and Glu-499. Residues 446–448 (IGS) and Glu-499 each bind L-methionine. Trp-576 contributes to the 5-methyltetrahydropteroyltri-L-glutamate binding site. Position 614 (Asp-614) interacts with L-homocysteine. Position 614 (Asp-614) interacts with L-methionine. Position 620 (Glu-620) interacts with 5-methyltetrahydropteroyltri-L-glutamate. Residues His-656, Cys-658, and Glu-680 each contribute to the Zn(2+) site. Catalysis depends on His-709, which acts as the Proton donor. Cys-741 is a Zn(2+) binding site.

The protein belongs to the vitamin-B12 independent methionine synthase family. The cofactor is Zn(2+).

The enzyme catalyses 5-methyltetrahydropteroyltri-L-glutamate + L-homocysteine = tetrahydropteroyltri-L-glutamate + L-methionine. Its pathway is amino-acid biosynthesis; L-methionine biosynthesis via de novo pathway; L-methionine from L-homocysteine (MetE route): step 1/1. Functionally, catalyzes the transfer of a methyl group from 5-methyltetrahydrofolate to homocysteine resulting in methionine formation. The sequence is that of 5-methyltetrahydropteroyltriglutamate--homocysteine methyltransferase from Streptomyces avermitilis (strain ATCC 31267 / DSM 46492 / JCM 5070 / NBRC 14893 / NCIMB 12804 / NRRL 8165 / MA-4680).